The primary structure comprises 1047 residues: Suppression of tumorigenicity 18 protein (1047 aa).

Disordered stretches follow at residues 41 to 92, 168 to 221, and 251 to 286; these read TAED…HSTA, FLIH…VPKY, and DSET…SESL. The segment covering 52 to 65 has biased composition (basic residues); that stretch reads NKRKSLLMKPRHYS. A compositionally biased stretch (basic and acidic residues) spans 171–181; the sequence is HSDDGRDKIDD. 2 CCHHC-type zinc fingers span residues 359–402 and 403–446; these read PRPE…PLEI and LAMH…KLAM. Residues cysteine 368, cysteine 373, histidine 386, cysteine 392, cysteine 412, cysteine 417, histidine 430, and cysteine 436 each contribute to the Zn(2+) site. 2 disordered regions span residues 523 to 563 and 672 to 710; these read GRKT…SYSY and YSKT…SPKP. Polar residues predominate over residues 550–563; it reads AHTQSPGRASSYSY. Positions 677–687 are enriched in basic and acidic residues; sequence GKTEEEKEKDP. 4 CCHHC-type zinc fingers span residues 715–758, 759–802, 807–850, and 860–903; these read RDLK…LKSL, MAAN…GVKM, EEKE…QKEN, and KLNK…IKKG. Zn(2+) contacts are provided by cysteine 724, cysteine 729, histidine 742, cysteine 748, cysteine 768, cysteine 773, histidine 786, cysteine 792, cysteine 816, cysteine 821, histidine 834, cysteine 840, cysteine 869, cysteine 874, histidine 887, and cysteine 893. Positions 920–992 form a coiled coil; sequence IESDEEIRHL…AGLSQALISS (73 aa).

The protein belongs to the MYT1 family. As to expression, detected at low levels in heart, liver, kidney, skeletal muscle, pancreas, testis, ovary and prostate. Detected at even lower levels in mammary epithelial cells and breast cancer cells.

Its subcellular location is the nucleus. In terms of biological role, repressor that binds to DNA sequences containing a bipartite element consisting of a direct repeat of the sequence 5'-AAAGTTT-3' separated by 2-9 nucleotides. Represses basal transcription activity from target promoters. Inhibits colony formation in cultured breast cancer cells. The chain is Suppression of tumorigenicity 18 protein (ST18) from Homo sapiens (Human).